The sequence spans 439 residues: tRNA modification GTPase MnmE (439 aa).

Positions 24, 81, and 121 each coordinate (6S)-5-formyl-5,6,7,8-tetrahydrofolate. The region spanning 218–363 is the TrmE-type G domain; sequence GFKVVIAGAP…LRDLIGRVVK (146 aa). Residue Asn228 coordinates K(+). GTP contacts are provided by residues 228–233, 247–253, and 272–275; these read NAGKSS, TDIAGTT, and DTAG. A Mg(2+)-binding site is contributed by Ser232. The K(+) site is built by Thr247, Ile249, and Thr252. Position 253 (Thr253) interacts with Mg(2+). Lys439 provides a ligand contact to (6S)-5-formyl-5,6,7,8-tetrahydrofolate.

Belongs to the TRAFAC class TrmE-Era-EngA-EngB-Septin-like GTPase superfamily. TrmE GTPase family. In terms of assembly, homodimer. Heterotetramer of two MnmE and two MnmG subunits. It depends on K(+) as a cofactor.

Its subcellular location is the cytoplasm. Its function is as follows. Exhibits a very high intrinsic GTPase hydrolysis rate. Involved in the addition of a carboxymethylaminomethyl (cmnm) group at the wobble position (U34) of certain tRNAs, forming tRNA-cmnm(5)s(2)U34. The sequence is that of tRNA modification GTPase MnmE from Rhizobium etli (strain CIAT 652).